Here is a 466-residue protein sequence, read N- to C-terminus: MSATQDYIVADIGLADFGRKEIAIAETEMPGLMACREEFGASKPLKGARITGSLHMTIQTAVLIETLVALGAEVRWASCNIFSTQDHAAAAIAASGVPVFAVKGETLEEYWTYTDKIFQWADGGVSNMILDDGGDATMYILLGARAEAGENILTNPGSEEEEILFAQIKKRLAATPGWFTRQRDAIKGVTEETTTGVNRLYQLQAKGLLPFPAINVNDSVTKSKFDNKYGCKESLVDGIRRGTDVMMAGKVAVVCGYGDVGKGSAASLSGAGARVKVTEVDPICALQAAMDGYEVVQLEDVVSSADIFITTTGNKDVIRIEHMRAMKDMAIVGNIGHFDNEIQVSALRNLKWTNVKPQVDLIEFPKGNRIILLSEGRLLNLGNATGHPSFVMSASFSNQVLAQIELFTKGEQYKNEVYVLPKQLDEKVARLHLAKLGAKLTELSEEQASYIGVKQQGPFKAEHYRY.

The substrate site is built by Thr-57, Asp-132, and Glu-192. 193 to 195 (TTT) serves as a coordination point for NAD(+). 2 residues coordinate substrate: Lys-222 and Asp-226. NAD(+) is bound by residues Asn-227, 256–261 (GYGDVG), Glu-279, Asn-314, 335–337 (IGH), and Asn-380.

It belongs to the adenosylhomocysteinase family. NAD(+) serves as cofactor.

The protein resides in the cytoplasm. It catalyses the reaction S-adenosyl-L-homocysteine + H2O = L-homocysteine + adenosine. The protein operates within amino-acid biosynthesis; L-homocysteine biosynthesis; L-homocysteine from S-adenosyl-L-homocysteine: step 1/1. Functionally, may play a key role in the regulation of the intracellular concentration of adenosylhomocysteine. This chain is Adenosylhomocysteinase, found in Rhizobium meliloti (strain 1021) (Ensifer meliloti).